The sequence spans 125 residues: Secreted RxLR effector protein 55 (125 aa).

The N-terminal stretch at 1-21 (MAASRSSITTLLLLIVAVALG) is a signal peptide. The RxLR motif lies at 35–38 (RQLR). Residues 51–87 (ESATSSSSSSALDHKSSAPGEATNASETEHSAASTAS) show a composition bias toward low complexity. Residues 51–96 (ESATSSSSSSALDHKSSAPGEATNASETEHSAASTASEPKHEGPTM) are disordered. N-linked (GlcNAc...) asparagine glycosylation is present at Asn-74. The chain crosses the membrane as a helical span at residues 99–119 (FVGPAAAGVLAILLIGAVIAF).

This sequence belongs to the RxLR effector family.

It localises to the secreted. The protein localises to the host cell membrane. Its function is as follows. Effector that acts as a broad suppressor of cell death to interrupt plant immunity. Inhibits cell death induced by cell death-inducing proteins, including the PAMP elicitor INF1 from P.infestans. This chain is Secreted RxLR effector protein 55, found in Plasmopara viticola (Downy mildew of grapevine).